The chain runs to 103 residues: Small ribosomal subunit protein uS10 (103 aa).

The protein belongs to the universal ribosomal protein uS10 family. In terms of assembly, part of the 30S ribosomal subunit.

Functionally, involved in the binding of tRNA to the ribosomes. The chain is Small ribosomal subunit protein uS10 from Picrophilus torridus (strain ATCC 700027 / DSM 9790 / JCM 10055 / NBRC 100828 / KAW 2/3).